The following is an 851-amino-acid chain: DNA mismatch repair protein MutS (851 aa).

602–609 (GPNMSGKS) contributes to the ATP binding site.

It belongs to the DNA mismatch repair MutS family.

In terms of biological role, this protein is involved in the repair of mismatches in DNA. It is possible that it carries out the mismatch recognition step. This protein has a weak ATPase activity. This is DNA mismatch repair protein MutS from Streptococcus pyogenes serotype M4 (strain MGAS10750).